The following is a 667-amino-acid chain: UvrABC system protein B (667 aa).

The Helicase ATP-binding domain occupies Ala-31 to Gln-414. Gly-44–Thr-51 contacts ATP. Positions Tyr-97–Ile-120 match the Beta-hairpin motif. The Helicase C-terminal domain maps to Gln-435–Ile-597. Positions Leu-630 to Gln-665 constitute a UVR domain.

It belongs to the UvrB family. Forms a heterotetramer with UvrA during the search for lesions. Interacts with UvrC in an incision complex.

Its subcellular location is the cytoplasm. The UvrABC repair system catalyzes the recognition and processing of DNA lesions. A damage recognition complex composed of 2 UvrA and 2 UvrB subunits scans DNA for abnormalities. Upon binding of the UvrA(2)B(2) complex to a putative damaged site, the DNA wraps around one UvrB monomer. DNA wrap is dependent on ATP binding by UvrB and probably causes local melting of the DNA helix, facilitating insertion of UvrB beta-hairpin between the DNA strands. Then UvrB probes one DNA strand for the presence of a lesion. If a lesion is found the UvrA subunits dissociate and the UvrB-DNA preincision complex is formed. This complex is subsequently bound by UvrC and the second UvrB is released. If no lesion is found, the DNA wraps around the other UvrB subunit that will check the other stand for damage. The polypeptide is UvrABC system protein B (Lactiplantibacillus plantarum (strain ATCC BAA-793 / NCIMB 8826 / WCFS1) (Lactobacillus plantarum)).